The sequence spans 173 residues: Large ribosomal subunit protein uL10 (173 aa).

The protein belongs to the universal ribosomal protein uL10 family. In terms of assembly, part of the ribosomal stalk of the 50S ribosomal subunit. The N-terminus interacts with L11 and the large rRNA to form the base of the stalk. The C-terminus forms an elongated spine to which L12 dimers bind in a sequential fashion forming a multimeric L10(L12)X complex.

Its function is as follows. Forms part of the ribosomal stalk, playing a central role in the interaction of the ribosome with GTP-bound translation factors. The polypeptide is Large ribosomal subunit protein uL10 (Oleidesulfovibrio alaskensis (strain ATCC BAA-1058 / DSM 17464 / G20) (Desulfovibrio alaskensis)).